An 880-amino-acid chain; its full sequence is Lon protease (880 aa).

Positions 1 to 37 (MADYNDKNYLLHMSGPDSDTGPGIENEDPRAVENPGH) are disordered. The span at 27–37 (EDPRAVENPGH) shows a compositional bias: basic and acidic residues. The 195-residue stretch at 57–251 (LPILPVRDVV…LVNTQLQREV (195 aa)) folds into the Lon N-terminal domain. 404–411 (GPPGVGKT) is an ATP binding site. The Lon proteolytic domain maps to 640–821 (KLMPGMALGL…DELLPLVFEG (182 aa)). Active-site residues include serine 727 and lysine 770. The span at 826 to 836 (GGVSGAGQAGD) shows a compositional bias: gly residues. The tract at residues 826–880 (GGVSGAGQAGDKGGKSKAAAGKKDVVAARPAKPAAPARRRKDKTEDELPTAEAGA) is disordered. Low complexity predominate over residues 852–861 (AARPAKPAAP).

It belongs to the peptidase S16 family. In terms of assembly, homohexamer. Organized in a ring with a central cavity.

Its subcellular location is the cytoplasm. The enzyme catalyses Hydrolysis of proteins in presence of ATP.. In terms of biological role, ATP-dependent serine protease that mediates the selective degradation of mutant and abnormal proteins as well as certain short-lived regulatory proteins. Required for cellular homeostasis and for survival from DNA damage and developmental changes induced by stress. Degrades polypeptides processively to yield small peptide fragments that are 5 to 10 amino acids long. Binds to DNA in a double-stranded, site-specific manner. The chain is Lon protease from Desulfovibrio desulfuricans (strain ATCC 27774 / DSM 6949 / MB).